Consider the following 506-residue polypeptide: Maturase K (506 aa).

Belongs to the intron maturase 2 family. MatK subfamily.

The protein resides in the plastid. The protein localises to the chloroplast. Functionally, usually encoded in the trnK tRNA gene intron. Probably assists in splicing its own and other chloroplast group II introns. The polypeptide is Maturase K (Prunus dulcis (Almond)).